Reading from the N-terminus, the 325-residue chain is tRNA N6-adenosine threonylcarbamoyltransferase (325 aa).

Residues histidine 111 and histidine 115 each coordinate Fe cation. Substrate is bound by residues 134–138, aspartate 167, glycine 180, and asparagine 277; that span reads LISGG. A Fe cation-binding site is contributed by aspartate 305.

The protein belongs to the KAE1 / TsaD family. Fe(2+) serves as cofactor.

It localises to the cytoplasm. The protein localises to the secreted. It catalyses the reaction L-threonylcarbamoyladenylate + adenosine(37) in tRNA = N(6)-L-threonylcarbamoyladenosine(37) in tRNA + AMP + H(+). In terms of biological role, required for the formation of a threonylcarbamoyl group on adenosine at position 37 (t(6)A37) in tRNAs that read codons beginning with adenine. Is involved in the transfer of the threonylcarbamoyl moiety of threonylcarbamoyl-AMP (TC-AMP) to the N6 group of A37, together with TsaE and TsaB. TsaD likely plays a direct catalytic role in this reaction. This Mannheimia haemolytica (Pasteurella haemolytica) protein is tRNA N6-adenosine threonylcarbamoyltransferase.